We begin with the raw amino-acid sequence, 452 residues long: Trigger factor (452 aa).

Positions 170–256 (NSIVKVDFVE…IKSIKKRDLP (87 aa)) constitute a PPIase FKBP-type domain.

The protein belongs to the FKBP-type PPIase family. Tig subfamily.

It is found in the cytoplasm. The catalysed reaction is [protein]-peptidylproline (omega=180) = [protein]-peptidylproline (omega=0). Its function is as follows. Involved in protein export. Acts as a chaperone by maintaining the newly synthesized protein in an open conformation. Functions as a peptidyl-prolyl cis-trans isomerase. In Borrelia garinii subsp. bavariensis (strain ATCC BAA-2496 / DSM 23469 / PBi) (Borreliella bavariensis), this protein is Trigger factor.